The following is a 103-amino-acid chain: Large ribosomal subunit protein uL24 (103 aa).

This sequence belongs to the universal ribosomal protein uL24 family. Part of the 50S ribosomal subunit.

One of two assembly initiator proteins, it binds directly to the 5'-end of the 23S rRNA, where it nucleates assembly of the 50S subunit. In terms of biological role, one of the proteins that surrounds the polypeptide exit tunnel on the outside of the subunit. This chain is Large ribosomal subunit protein uL24, found in Treponema pallidum (strain Nichols).